The following is an 896-amino-acid chain: Alanine--tRNA ligase (896 aa).

Positions 581, 585, 684, and 688 each coordinate Zn(2+).

It belongs to the class-II aminoacyl-tRNA synthetase family. Zn(2+) is required as a cofactor.

It is found in the cytoplasm. The catalysed reaction is tRNA(Ala) + L-alanine + ATP = L-alanyl-tRNA(Ala) + AMP + diphosphate. Its function is as follows. Catalyzes the attachment of alanine to tRNA(Ala) in a two-step reaction: alanine is first activated by ATP to form Ala-AMP and then transferred to the acceptor end of tRNA(Ala). Also edits incorrectly charged Ser-tRNA(Ala) and Gly-tRNA(Ala) via its editing domain. This is Alanine--tRNA ligase from Renibacterium salmoninarum (strain ATCC 33209 / DSM 20767 / JCM 11484 / NBRC 15589 / NCIMB 2235).